A 920-amino-acid polypeptide reads, in one-letter code: Translation initiation factor IF-2 (920 aa).

Composition is skewed to basic and acidic residues over residues 149 to 175 (EAEM…EKPV), 186 to 197 (AEKKATADKAAK), and 255 to 265 (AKPEGADDKKK). Disordered stretches follow at residues 149–197 (EAEM…KAAK) and 245–319 (EAKK…KQRQ). Gly residues predominate over residues 301-311 (SSGGVGGWRSG). A tr-type G domain is found at 418 to 585 (PRPPVVTVMG…NVLLQAEILE (168 aa)). A G1 region spans residues 427 to 434 (GHVDHGKT). 427–434 (GHVDHGKT) serves as a coordination point for GTP. The tract at residues 452 to 456 (GITQH) is G2. Residues 473-476 (DTPG) form a G3 region. GTP-binding positions include 473 to 477 (DTPGH) and 527 to 530 (NKID). A G4 region spans residues 527–530 (NKID). A G5 region spans residues 563–565 (SAK).

The protein belongs to the TRAFAC class translation factor GTPase superfamily. Classic translation factor GTPase family. IF-2 subfamily.

The protein resides in the cytoplasm. In terms of biological role, one of the essential components for the initiation of protein synthesis. Protects formylmethionyl-tRNA from spontaneous hydrolysis and promotes its binding to the 30S ribosomal subunits. Also involved in the hydrolysis of GTP during the formation of the 70S ribosomal complex. This chain is Translation initiation factor IF-2, found in Polynucleobacter asymbioticus (strain DSM 18221 / CIP 109841 / QLW-P1DMWA-1) (Polynucleobacter necessarius subsp. asymbioticus).